The sequence spans 159 residues: Endoribonuclease YbeY (159 aa).

Residues His122, His126, and His132 each contribute to the Zn(2+) site.

This sequence belongs to the endoribonuclease YbeY family. Zn(2+) serves as cofactor.

It is found in the cytoplasm. Functionally, single strand-specific metallo-endoribonuclease involved in late-stage 70S ribosome quality control and in maturation of the 3' terminus of the 16S rRNA. The polypeptide is Endoribonuclease YbeY (Roseiflexus castenholzii (strain DSM 13941 / HLO8)).